Reading from the N-terminus, the 218-residue chain is Probable transaldolase (218 aa).

Residue Lys83 is the Schiff-base intermediate with substrate of the active site.

The protein belongs to the transaldolase family. Type 3B subfamily.

Its subcellular location is the cytoplasm. The enzyme catalyses D-sedoheptulose 7-phosphate + D-glyceraldehyde 3-phosphate = D-erythrose 4-phosphate + beta-D-fructose 6-phosphate. It functions in the pathway carbohydrate degradation; pentose phosphate pathway; D-glyceraldehyde 3-phosphate and beta-D-fructose 6-phosphate from D-ribose 5-phosphate and D-xylulose 5-phosphate (non-oxidative stage): step 2/3. Transaldolase is important for the balance of metabolites in the pentose-phosphate pathway. The chain is Probable transaldolase from Thermotoga petrophila (strain ATCC BAA-488 / DSM 13995 / JCM 10881 / RKU-1).